We begin with the raw amino-acid sequence, 67 residues long: Large ribosomal subunit protein uL29 (67 aa).

The protein belongs to the universal ribosomal protein uL29 family.

This is Large ribosomal subunit protein uL29 from Magnetococcus marinus (strain ATCC BAA-1437 / JCM 17883 / MC-1).